The following is a 677-amino-acid chain: Threonine--tRNA ligase (677 aa).

The TGS domain occupies 1–59 (MAQATISITVNGEAKEVEATTTGVELFAEDKNIIAVKINGENRDLYTPLNDGDTVDPIA). The catalytic stretch occupies residues 255 to 561 (DHRKLGAEMD…LLEHYAGAFP (307 aa)). Residues Cys-360, His-411, and His-538 each contribute to the Zn(2+) site.

The protein belongs to the class-II aminoacyl-tRNA synthetase family. Homodimer. Zn(2+) serves as cofactor.

The protein resides in the cytoplasm. The enzyme catalyses tRNA(Thr) + L-threonine + ATP = L-threonyl-tRNA(Thr) + AMP + diphosphate + H(+). Functionally, catalyzes the attachment of threonine to tRNA(Thr) in a two-step reaction: L-threonine is first activated by ATP to form Thr-AMP and then transferred to the acceptor end of tRNA(Thr). Also edits incorrectly charged L-seryl-tRNA(Thr). In Bifidobacterium longum (strain DJO10A), this protein is Threonine--tRNA ligase.